The chain runs to 244 residues: Probable transcriptional regulatory protein Dgeo_2194 (244 aa).

The segment at 1 to 21 (MAGHSKWAQIKRKKGANDKKR) is disordered.

The protein belongs to the TACO1 family.

The protein resides in the cytoplasm. The protein is Probable transcriptional regulatory protein Dgeo_2194 of Deinococcus geothermalis (strain DSM 11300 / CIP 105573 / AG-3a).